The sequence spans 621 residues: E3 SUMO-protein ligase PIAS2 (621 aa).

The 35-residue stretch at 11 to 45 (VSSFRVSELQVLLGFAGRNKSGRKHDLLMRALHLL) folds into the SAP domain. Residues 19–23 (LQVLL) carry the LXXLL motif motif. Glycyl lysine isopeptide (Lys-Gly) (interchain with G-Cter in SUMO2) cross-links involve residues Lys46 and Lys249. The PINIT domain maps to 134 to 299 (QPSPPIPPVH…SMSVYLVRQL (166 aa)). Residues 331-412 (PDSEIATTSL…FMEILNDCSD (82 aa)) form an SP-RING-type zinc finger. Residues Cys362, His364, Cys385, and Cys388 each contribute to the Zn(2+) site. Residues Lys430, Lys435, Lys443, and Lys452 each participate in a glycyl lysine isopeptide (Lys-Gly) (interchain with G-Cter in SUMO2) cross-link. Positions 467-473 (IDVIDLT) are SUMO1-binding. Phosphoserine is present on residues Ser476, Ser477, and Ser478. The Nuclear localization signal signature appears at 484–492 (PPAKRKCIF). A Glycyl lysine isopeptide (Lys-Gly) (interchain with G-Cter in SUMO2) cross-link involves residue Lys489. The residue at position 499 (Ser499) is a Phosphoserine. A Glycyl lysine isopeptide (Lys-Gly) (interchain with G-Cter in SUMO2) cross-link involves residue Lys502. Over residues 577–610 (TASSTSVTTTSPHESSTHVSSSSSRSETGVITSS) the composition is skewed to low complexity. The disordered stretch occupies residues 577–621 (TASSTSVTTTSPHESSTHVSSSSSRSETGVITSSGRNIPDIISLD).

The protein belongs to the PIAS family. In terms of assembly, binds SUMO1 and UBE2I. Interacts with AXIN1, JUN, MDM2, PARK7, TP53 and TP73 isoform alpha, but not TP73 isoform beta. Interacts with STAT4 following IL12 and IFN-alpha stimulation of T-cells. Interacts also with GTF2I, GTF2IRD1, IKFZ1, DAB2 and MSX2, as well as with several steroid receptors, including ESR1, ESR2, NR3C1, PGR, AR, and with NCOA2. Sumoylation of a target protein seems to enhance the interaction. Binds to sumoylated ELK1. Interacts with PLAG1. Binds DNA, such as CDKN1A promoter, in a sequence-specific manner. Interacts with KLF8; the interaction results in SUMO ligation and repression of KLF8 transcriptional activity and of its cell cycle progression into G(1) phase. Interacts with IFIH1/MDA5. Interacts with PML. Interacts with PRDM1. Post-translationally, sumoylated.

Its subcellular location is the nucleus speckle. It is found in the nucleus. The protein resides in the PML body. It catalyses the reaction S-ubiquitinyl-[E2 ubiquitin-conjugating enzyme]-L-cysteine + [acceptor protein]-L-lysine = [E2 ubiquitin-conjugating enzyme]-L-cysteine + N(6)-ubiquitinyl-[acceptor protein]-L-lysine.. It participates in protein modification; protein sumoylation. Functionally, functions as an E3-type small ubiquitin-like modifier (SUMO) ligase, stabilizing the interaction between UBE2I and the substrate, and as a SUMO-tethering factor. Plays a crucial role as a transcriptional coregulation in various cellular pathways, including the STAT pathway, the p53 pathway and the steroid hormone signaling pathway. The effects of this transcriptional coregulation, transactivation or silencing may vary depending upon the biological context and PIAS2 isoform studied. However, it seems to be mostly involved in gene silencing. Binds to sumoylated ELK1 and enhances its transcriptional activity by preventing recruitment of HDAC2 by ELK1, thus reversing SUMO-mediated repression of ELK1 transactivation activity. Isoform PIASx-beta, but not isoform PIASx-alpha, promotes MDM2 sumoylation. Isoform PIASx-alpha promotes PARK7 sumoylation. Isoform PIASx-beta promotes NCOA2 sumoylation more efficiently than isoform PIASx-alpha. Sumoylates PML at'Lys-65' and 'Lys-160'. This is E3 SUMO-protein ligase PIAS2 (Pias2) from Mus musculus (Mouse).